The following is a 175-amino-acid chain: Peptide deformylase (175 aa).

Fe cation contacts are provided by C96 and H138. E139 is a catalytic residue. Residue H142 coordinates Fe cation.

Belongs to the polypeptide deformylase family. The cofactor is Fe(2+).

It carries out the reaction N-terminal N-formyl-L-methionyl-[peptide] + H2O = N-terminal L-methionyl-[peptide] + formate. Removes the formyl group from the N-terminal Met of newly synthesized proteins. Requires at least a dipeptide for an efficient rate of reaction. N-terminal L-methionine is a prerequisite for activity but the enzyme has broad specificity at other positions. The sequence is that of Peptide deformylase from Rhodopseudomonas palustris (strain BisB18).